The primary structure comprises 145 residues: UPF0735 ACT domain-containing protein CKL_0858 (145 aa).

Positions 69–144 (TLGLTLAHKA…SVIKVNLAAV (76 aa)) constitute an ACT domain.

The protein belongs to the UPF0735 family.

The sequence is that of UPF0735 ACT domain-containing protein CKL_0858 from Clostridium kluyveri (strain ATCC 8527 / DSM 555 / NBRC 12016 / NCIMB 10680 / K1).